The sequence spans 399 residues: DNA replication and repair protein RecF (399 aa).

30–37 is a binding site for ATP; it reads GSNGIGKT.

Belongs to the RecF family.

The protein resides in the cytoplasm. Functionally, the RecF protein is involved in DNA metabolism; it is required for DNA replication and normal SOS inducibility. RecF binds preferentially to single-stranded, linear DNA. It also seems to bind ATP. This chain is DNA replication and repair protein RecF, found in Paenarthrobacter aurescens (strain TC1).